Consider the following 92-residue polypeptide: Large ribosomal subunit protein bL28 (92 aa).

This sequence belongs to the bacterial ribosomal protein bL28 family.

The chain is Large ribosomal subunit protein bL28 from Borreliella burgdorferi (strain ATCC 35210 / DSM 4680 / CIP 102532 / B31) (Borrelia burgdorferi).